The chain runs to 382 residues: D-galactonate dehydratase (382 aa).

D183 is a binding site for Mg(2+). H185 (proton donor) is an active-site residue. Residues E209 and E235 each coordinate Mg(2+). H285 functions as the Proton acceptor in the catalytic mechanism.

Belongs to the mandelate racemase/muconate lactonizing enzyme family. GalD subfamily. It depends on Mg(2+) as a cofactor.

The enzyme catalyses D-galactonate = 2-dehydro-3-deoxy-D-galactonate + H2O. Its pathway is carbohydrate acid metabolism; D-galactonate degradation; D-glyceraldehyde 3-phosphate and pyruvate from D-galactonate: step 1/3. Its function is as follows. Catalyzes the dehydration of D-galactonate to 2-keto-3-deoxy-D-galactonate. The chain is D-galactonate dehydratase from Verminephrobacter eiseniae (strain EF01-2).